We begin with the raw amino-acid sequence, 342 residues long: L-lysine 2,3-aminomutase (342 aa).

The 224-residue stretch at 106 to 329 folds into the Radical SAM core domain; the sequence is HKYHNRALLL…PKLAREIGGE (224 aa). The [4Fe-4S] cluster site is built by Cys120, Cys124, and Cys127. Lys332 bears the N6-(pyridoxal phosphate)lysine mark.

This sequence belongs to the radical SAM superfamily. KamA family. It depends on [4Fe-4S] cluster as a cofactor. Pyridoxal 5'-phosphate serves as cofactor.

The catalysed reaction is L-lysine = D-beta-lysine. With EpmA is involved in the beta-lysylation step of the post-translational modification of translation elongation factor P (EF-P) on 'Lys-34'. EpmB appears to act before EpmA. Displays lysine 2,3-aminomutase activity, producing (R)-beta-lysine from (S)-alpha-lysine (L-lysine). Cannot use (S)-ornithine or (R)-alpha-lysine as a substrate. The chain is L-lysine 2,3-aminomutase (epmB) from Escherichia coli (strain K12).